Reading from the N-terminus, the 160-residue chain is Small ribosomal subunit protein uS19 (160 aa).

This sequence belongs to the universal ribosomal protein uS19 family.

Functionally, protein S19 forms a complex with S13 that binds strongly to the 16S ribosomal RNA. In Pyrobaculum islandicum (strain DSM 4184 / JCM 9189 / GEO3), this protein is Small ribosomal subunit protein uS19.